The primary structure comprises 538 residues: Ubiquitin domain-containing protein DSK2a (538 aa).

Residues 18 to 93 form the Ubiquitin-like domain; that stretch reads VAVNVRCSNG…VHMVRGFVPS (76 aa). A disordered region spans residues 95–120; the sequence is PSAPAANAGNQTTAPQAVGSNDSSNL. A compositionally biased stretch (polar residues) spans 102–119; sequence AGNQTTAPQAVGSNDSSN. 2 STI1 domains span residues 138–179 and 192–231; these read GNAM…QNLM and NPQM…MREM. The tract at residues 289 to 316 is disordered; the sequence is QGVTTQGSDTSNNISAPNAETGTPNANP. STI1 domains are found at residues 357 to 394 and 398 to 433; these read SPLG…MNQL and NPQL…MQQM. The UBA domain occupies 491–535; sequence PPEERFATQLQQLQEMGFYDRAENIRALLATNGNVNAAVERLLGS.

Interacts with 'Lys-48'-linked polyubiquitin chains via its UBA domain. Interacts with RPN10 and RPN13. Interacts with PEX2 and PEX12. As to expression, ubiquitous with a strong expression level in inflorescence.

The protein localises to the nucleus. The protein resides in the cytoplasm. Binds and presumably selects ubiquitin-conjugates for destruction. Prefers multiubiquitin chains rather than single ubiquitins, with a binding affinity for 'Lys-48'-linked ubiquitin chains. Acts as a ubiquitin receptor that associates with the 26S proteasomal docking subunit RPN10 for the indirect recognition of ubiquitinated substrates of ubiquitin/26S proteasome-mediated proteolysis (UPP). The chain is Ubiquitin domain-containing protein DSK2a (DSK2A) from Arabidopsis thaliana (Mouse-ear cress).